The chain runs to 322 residues: Transaldolase (322 aa).

The Schiff-base intermediate with substrate role is filled by Lys136.

It belongs to the transaldolase family. Type 1 subfamily. Homodimer.

The protein resides in the cytoplasm. It carries out the reaction D-sedoheptulose 7-phosphate + D-glyceraldehyde 3-phosphate = D-erythrose 4-phosphate + beta-D-fructose 6-phosphate. The protein operates within carbohydrate degradation; pentose phosphate pathway; D-glyceraldehyde 3-phosphate and beta-D-fructose 6-phosphate from D-ribose 5-phosphate and D-xylulose 5-phosphate (non-oxidative stage): step 2/3. Functionally, transaldolase is important for the balance of metabolites in the pentose-phosphate pathway. In Xanthomonas euvesicatoria pv. vesicatoria (strain 85-10) (Xanthomonas campestris pv. vesicatoria), this protein is Transaldolase.